The sequence spans 165 residues: Neurotrophin-3 (165 aa).

The N-terminal stretch at 1-3 (IQS) is a signal peptide. Residues 4–119 (TSMDQGSLTE…VLNRTSRRKR (116 aa)) constitute a propeptide that is removed on maturation. N-linked (GlcNAc...) asparagine glycosylation occurs at Asn-112.

This sequence belongs to the NGF-beta family.

It localises to the secreted. Seems to promote the survival of visceral and proprioceptive sensory neurons. In Calabaria reinhardtii (Calabar boa), this protein is Neurotrophin-3 (NTF3).